A 624-amino-acid chain; its full sequence is Chaperone protein HtpG (624 aa).

The a; substrate-binding stretch occupies residues 1 to 336 (MKGQETRGFQ…SNDLPLNVSR (336 aa)). Positions 337–552 (EILQDSTVTR…ADEMSTQMAK (216 aa)) are b. The c stretch occupies residues 553-624 (LFAAAGQSVP…IRRMNQLLVS (72 aa)).

The protein belongs to the heat shock protein 90 family. As to quaternary structure, homodimer.

It localises to the cytoplasm. Functionally, molecular chaperone. Has ATPase activity. The sequence is that of Chaperone protein HtpG from Salmonella paratyphi B (strain ATCC BAA-1250 / SPB7).